Reading from the N-terminus, the 743-residue chain is Threonine synthase-like 1 (743 aa).

Lys281 is subject to N6-acetyllysine. Lys351 carries the post-translational modification N6-(pyridoxal phosphate)lysine.

It belongs to the threonine synthase family. It depends on pyridoxal 5'-phosphate as a cofactor.

The chain is Threonine synthase-like 1 (THNSL1) from Homo sapiens (Human).